Consider the following 272-residue polypeptide: MHKPQSFFHLHLISDATGETLLAAGRAAAAQYKNARAIEHIYPLVRTEKQLEKVFASIDEEPGIVLYTIVDQKLARQVDERCQAMGLPCVSVLEPVLAVFQSYLGTPAGRRVGAQHVLDAEYFRRIDALNFTMEHDDGQLPHNVEEADIVLVGVSRTSKTPTSIYLANRGIKTANVPIVLDAPLPEPLLNAKRPLVVGLIASAERISQVRQNRLLGASHVDFDAYVDRAEIARELAYARQLCNRHNWPVIDVTRRSIEETAAAILALRGKSW.

An ADP-binding site is contributed by 153–160 (GVSRTSKT).

The protein belongs to the pyruvate, phosphate/water dikinase regulatory protein family. PDRP subfamily.

It carries out the reaction N(tele)-phospho-L-histidyl/L-threonyl-[pyruvate, phosphate dikinase] + ADP = N(tele)-phospho-L-histidyl/O-phospho-L-threonyl-[pyruvate, phosphate dikinase] + AMP + H(+). The catalysed reaction is N(tele)-phospho-L-histidyl/O-phospho-L-threonyl-[pyruvate, phosphate dikinase] + phosphate + H(+) = N(tele)-phospho-L-histidyl/L-threonyl-[pyruvate, phosphate dikinase] + diphosphate. Bifunctional serine/threonine kinase and phosphorylase involved in the regulation of the pyruvate, phosphate dikinase (PPDK) by catalyzing its phosphorylation/dephosphorylation. The sequence is that of Putative pyruvate, phosphate dikinase regulatory protein from Chelativorans sp. (strain BNC1).